The following is a 300-amino-acid chain: N-acetylmannosamine kinase (300 aa).

Residues 5-12 (ALDIGGTK) and 132-139 (GVGGGIVL) contribute to the ATP site. Residues H156, C166, C168, and C173 each coordinate Zn(2+).

The protein belongs to the ROK (NagC/XylR) family. NanK subfamily. Homodimer.

It catalyses the reaction an N-acyl-D-mannosamine + ATP = an N-acyl-D-mannosamine 6-phosphate + ADP + H(+). It participates in amino-sugar metabolism; N-acetylneuraminate degradation; D-fructose 6-phosphate from N-acetylneuraminate: step 2/5. Its function is as follows. Catalyzes the phosphorylation of N-acetylmannosamine (ManNAc) to ManNAc-6-P. The chain is N-acetylmannosamine kinase from Haemophilus influenzae (strain 86-028NP).